The primary structure comprises 199 residues: Ribonuclease HII (199 aa).

The region spanning 14-199 is the RNase H type-2 domain; that stretch reads GLLAGVDEAG…SFAPVAEVLR (186 aa). D20, E21, and D112 together coordinate a divalent metal cation.

The protein belongs to the RNase HII family. Mn(2+) is required as a cofactor. Mg(2+) serves as cofactor.

It localises to the cytoplasm. It carries out the reaction Endonucleolytic cleavage to 5'-phosphomonoester.. Its function is as follows. Endonuclease that specifically degrades the RNA of RNA-DNA hybrids. In Polaromonas sp. (strain JS666 / ATCC BAA-500), this protein is Ribonuclease HII.